The following is a 204-amino-acid chain: Large ribosomal subunit protein bL25 (204 aa).

Residues 1–20 are disordered; sequence MSETYELKAETRDRVGKGSS.

Belongs to the bacterial ribosomal protein bL25 family. CTC subfamily. Part of the 50S ribosomal subunit; part of the 5S rRNA/L5/L18/L25 subcomplex. Contacts the 5S rRNA. Binds to the 5S rRNA independently of L5 and L18.

This is one of the proteins that binds to the 5S RNA in the ribosome where it forms part of the central protuberance. The polypeptide is Large ribosomal subunit protein bL25 (Rhizobium meliloti (strain 1021) (Ensifer meliloti)).